Consider the following 423-residue polypeptide: Galactosylceramide sulfotransferase (423 aa).

Residues 1 to 14 are Cytoplasmic-facing; the sequence is MLPPQKKPWESMAK. Residues 15 to 35 traverse the membrane as a helical; Signal-anchor for type II membrane protein segment; the sequence is GLVLGALFTSFLLLVYSYAVP. At 36–423 the chain is on the lumenal side; sequence PLHAGLASTT…WKFIRDFLRW (388 aa). Residues N66 and N312 are each glycosylated (N-linked (GlcNAc...) asparagine).

It belongs to the galactose-3-O-sulfotransferase family. As to expression, expressed in kidney proximal tubule, gastric mucosa and adenocarcinoma. Highly expressed in renal cell carcinoma cell lines.

It localises to the golgi apparatus membrane. It catalyses the reaction a beta-D-galactosyl-(1&lt;-&gt;1')-N-acylsphing-4-enine + 3'-phosphoadenylyl sulfate = an N-acyl-1-beta-D-(3-O-sulfo)-galactosyl-sphing-4-enine + adenosine 3',5'-bisphosphate + H(+). The catalysed reaction is a 1-O-alkyl-2-acyl-3-O-(beta-D-galactosyl)-sn-glycerol + 3'-phosphoadenylyl sulfate = a 1-O-alkyl-2-acyl-3-(beta-D-3-sulfogalactosyl)-sn-glycerol + adenosine 3',5'-bisphosphate + H(+). It carries out the reaction a beta-D-Gal-(1&lt;-&gt;1')-ceramide + 3'-phosphoadenylyl sulfate = 1-(3-O-sulfo-beta-D-galactosyl)-ceramide + adenosine 3',5'-bisphosphate + H(+). The enzyme catalyses a 1,2-diacyl-3-O-(beta-D-galactosyl)-sn-glycerol + 3'-phosphoadenylyl sulfate = 1,2-diacyl-3-(3-O-sulfo-beta-D-galactosyl)-sn-glycerol + adenosine 3',5'-bisphosphate + H(+). It catalyses the reaction a beta-D-Gal-(1-&gt;4)-beta-D-Glc-(1&lt;-&gt;1)-Cer(d18:1(4E)) + 3'-phosphoadenylyl sulfate = beta-D-3-sulfogalactosyl-(1-&gt;4)-beta-D-glucosyl-(1&lt;-&gt;1')-N-acylsphing-4-enine + adenosine 3',5'-bisphosphate + H(+). It participates in lipid metabolism; sphingolipid metabolism. Catalyzes the transfer of a sulfate group to position 3 of non-reducing beta-galactosyl residues in glycerolipids and sphingolipids, therefore participates in the biosynthesis of sulfoglycolipids. Catalyzes the synthesis of galactosylceramide sulfate (sulfatide), a major lipid component of the myelin sheath and of monogalactosylalkylacylglycerol sulfate (seminolipid), present in spermatocytes. Seems to prefer beta-glycosides at the non-reducing termini of sugar chains attached to a lipid moiety. Also acts on lactosylceramide, galactosyl 1-alkyl-2-sn-glycerol and galactosyl diacylglycerol (in vitro). The protein is Galactosylceramide sulfotransferase of Homo sapiens (Human).